The primary structure comprises 356 residues: NF-kappa-B inhibitor beta (356 aa).

2 positions are modified to phosphoserine; by RPS6KA1: S19 and S23. ANK repeat units lie at residues 57–86 (DGDT…GTEY), 93–122 (LGQT…GLCV), and 126–155 (RGHT…RRPR). The segment at 149–193 (PRPRRPREAPDTYLAQGPDRTPDTNHTPVALYPDSDLEKEEEESE) is disordered. Residue S183 is modified to Phosphoserine. Acidic residues predominate over residues 183 to 193 (SDLEKEEEESE). ANK repeat units follow at residues 206 to 235 (EGHT…DLDK), 240 to 269 (CGRS…NPAA), and 273 to 302 (GGRT…PEPE). The tract at residues 298–356 (APEPEGEDEKSGPCSSSSDSDSGDEGDEYDDIVVHSSRSQTRLPPTPASKPLPDDPRPV) is disordered. Phosphoserine; by CK2 is present on residues S313 and S315. Residues 318–328 (DSGDEGDEYDD) are compositionally biased toward acidic residues.

This sequence belongs to the NF-kappa-B inhibitor family. As to quaternary structure, interacts with THRB (via ligand-binding domain). Interacts with RELA and REL. Interacts with COMMD1. Interacts with inhibitor kappa B-interacting Ras-like NKIRAS1 and NKIRAS2. Post-translationally, phosphorylated by RPS6KA1; followed by degradation. Interaction with NKIRAS1 and NKIRAS2 probably prevents phosphorylation. As to expression, expressed in all tissues examined.

Its subcellular location is the cytoplasm. It is found in the nucleus. Functionally, inhibits NF-kappa-B by complexing with and trapping it in the cytoplasm. However, the unphosphorylated form resynthesized after cell stimulation is able to bind NF-kappa-B allowing its transport to the nucleus and protecting it to further NFKBIA-dependent inactivation. Association with inhibitor kappa B-interacting NKIRAS1 and NKIRAS2 prevent its phosphorylation rendering it more resistant to degradation, explaining its slower degradation. The sequence is that of NF-kappa-B inhibitor beta (NFKBIB) from Homo sapiens (Human).